The primary structure comprises 1123 residues: MSSSRPSQSSTTSSRSKHSARIIAQTSIDAKLHADFEESGDSFDYSSSVRVTNVAEGEQRPKSDKVTTAYLHQIQKGKFIQPFGCLLALDEKTLKVIAFSENAPEMLTMVSHAVPSVGEHPVLGIGIDIRTIFTGPSGAALQKALGFGEVSLLNPVLVHCKNSGKPFYAIVHRVTGSLIIDFEPVKPYEVPMTAAGALQSYKLAAKAITRLQSLPSGSMERLCDTMVQEVFELTGYDRVMGYKFHDDDHGEVVSEITKPGLEPYLGLHYPATDIPQAARFLFMKNKVRMICDCRAKHVKVVQDEKLPFDLTLCGSTLRAPHYCHLQYMENMNSIASLVMAVVVNDGDEEGESSDSSQSQKRKRLWGLVVSHNTTPRFAPFPLRYACEFLAQVFAILVNKELELENQFLEKNILRTQTLLCDMLMRDAPLGIVSQSPNIMDLIKCDGAALLYKNKIHRLGMNPSDFQLHDIVSWLCEYHTDSTGLSTDSLYDAGFPGALALGDAVCGMAAVRISDKDWLFWYRSHTAAEVRWGGAKHEPGEKDDGRKMHPRSSFKGFLEVVKTRSIPWKDYEMDRIHSLQLILRNAFKDADAVNSNTISIHTKLNDLKIDGMQELEAVTAEMVRLIETASVPIFAVDVDGQVNGWNTKVAELTGLPVDEAIGKHLLTLVEDSSVDTVNKMLELALQGQEERNVEFEIKTHGPSRDSSPISLIVNACASKDVRDSVVGVCFIAQDITGQKSIMDKFTRIEGDYRAIIQNPHPLIPPIFGTDQFGWCSEWNSAMTMLTGWRRDDVMDKMLLGEVFGTQAACCRLKNQEAFVNFGVILNNAITGQESEKIPFGFFARYGKYVECLLCVSKRLDKEGAVTGLFCFLQLASHELQQALHVQRLSEQTALKRLKVLAYIRRQIRNPLSGIIFSRKMLEGTSLGEEQKNILHTSAQCQRQLDKILDDTDLDSIIEGYLDLEMLEFKLHEVLVASISQVMMKSNGKNIMISNDMVEDLLNETLYGDSPRLQQVLANFLLVSVNSTPSGGKLSISGKLTKDRIGESVQLALLEFRIRHTGGGVPEELLSQMFGSEADASEEGISLLVSRKLVKLMNGEVQYLREAGRSTFIISVELAVATKSS.

Positions 1-14 are enriched in low complexity; the sequence is MSSSRPSQSSTTSS. Residues 1–20 form a disordered region; that stretch reads MSSSRPSQSSTTSSRSKHSA. In terms of domain architecture, GAF spans 218–401; the sequence is SMERLCDTMV…VFAILVNKEL (184 aa). Phytochromobilin is bound at residue cysteine 323. Positions 617 to 687 constitute a PAS 1 domain; sequence VTAEMVRLIE…KMLELALQGQ (71 aa). Residues 690–746 enclose the PAC domain; the sequence is RNVEFEIKTHGPSRDSSPISLIVNACASKDVRDSVVGVCFIAQDITGQKSIMDKFTR. The region spanning 747 to 821 is the PAS 2 domain; the sequence is IEGDYRAIIQ…KNQEAFVNFG (75 aa). A Histidine kinase domain is found at 901–1118; the sequence is YIRRQIRNPL…TFIISVELAV (218 aa).

The protein belongs to the phytochrome family. In terms of assembly, homodimer. Post-translationally, contains one covalently linked phytochromobilin chromophore.

In terms of biological role, regulatory photoreceptor which exists in two forms that are reversibly interconvertible by light: the Pr form that absorbs maximally in the red region of the spectrum and the Pfr form that absorbs maximally in the far-red region. Photoconversion of Pr to Pfr induces an array of morphogenic responses, whereas reconversion of Pfr to Pr cancels the induction of those responses. Pfr controls the expression of a number of nuclear genes including those encoding the small subunit of ribulose-bisphosphate carboxylase, chlorophyll A/B binding protein, protochlorophyllide reductase, rRNA, etc. It also controls the expression of its own gene(s) in a negative feedback fashion. This Solanum tuberosum (Potato) protein is Phytochrome A (PHYA).